Consider the following 642-residue polypeptide: Threonine--tRNA ligase (642 aa).

The 61-residue stretch at 1 to 61 (MPVITLPDGS…ESDAQLAIIT (61 aa)) folds into the TGS domain. Residues 243–534 (DHRKIGKQLD…LTEEYAGFFP (292 aa)) form a catalytic region. Residues cysteine 334, histidine 385, and histidine 511 each contribute to the Zn(2+) site.

This sequence belongs to the class-II aminoacyl-tRNA synthetase family. In terms of assembly, homodimer. Zn(2+) is required as a cofactor.

Its subcellular location is the cytoplasm. It carries out the reaction tRNA(Thr) + L-threonine + ATP = L-threonyl-tRNA(Thr) + AMP + diphosphate + H(+). In terms of biological role, catalyzes the attachment of threonine to tRNA(Thr) in a two-step reaction: L-threonine is first activated by ATP to form Thr-AMP and then transferred to the acceptor end of tRNA(Thr). Also edits incorrectly charged L-seryl-tRNA(Thr). This chain is Threonine--tRNA ligase, found in Yersinia pseudotuberculosis serotype O:1b (strain IP 31758).